Here is a 256-residue protein sequence, read N- to C-terminus: Thiazole synthase (256 aa).

Lys96 acts as the Schiff-base intermediate with DXP in catalysis. 1-deoxy-D-xylulose 5-phosphate is bound by residues Gly157, 183-184 (AG), and 205-206 (NT).

The protein belongs to the ThiG family. As to quaternary structure, homotetramer. Forms heterodimers with either ThiH or ThiS.

The protein localises to the cytoplasm. The catalysed reaction is [ThiS sulfur-carrier protein]-C-terminal-Gly-aminoethanethioate + 2-iminoacetate + 1-deoxy-D-xylulose 5-phosphate = [ThiS sulfur-carrier protein]-C-terminal Gly-Gly + 2-[(2R,5Z)-2-carboxy-4-methylthiazol-5(2H)-ylidene]ethyl phosphate + 2 H2O + H(+). The protein operates within cofactor biosynthesis; thiamine diphosphate biosynthesis. Its function is as follows. Catalyzes the rearrangement of 1-deoxy-D-xylulose 5-phosphate (DXP) to produce the thiazole phosphate moiety of thiamine. Sulfur is provided by the thiocarboxylate moiety of the carrier protein ThiS. In vitro, sulfur can be provided by H(2)S. The chain is Thiazole synthase from Bacillus cereus (strain G9842).